A 51-amino-acid chain; its full sequence is Large ribosomal subunit protein eL39 (51 aa).

Belongs to the eukaryotic ribosomal protein eL39 family.

This chain is Large ribosomal subunit protein eL39, found in Methanopyrus kandleri (strain AV19 / DSM 6324 / JCM 9639 / NBRC 100938).